A 123-amino-acid chain; its full sequence is Succinate dehydrogenase hydrophobic membrane anchor subunit (123 aa).

The Cytoplasmic segment spans residues 1 to 13 (MAETEKMKYGSLN). A helical transmembrane segment spans residues 14–34 (RFAQAVTGLFLLFFLGVHLYV). The Extracellular segment spans residues 35–59 (AHIDFGHPVAFFSSVINQLHNPWWL). The chain crosses the membrane as a helical span at residues 60–81 (AFFLIFVYIITYHGINGLNHIV). Heme is bound at residue His72. The Cytoplasmic segment spans residues 82–91 (ADTSISEKAK). Residues 92-116 (RNIGIALMVIYVITIIYGTILALLV) traverse the membrane as a helical segment.

Part of an enzyme complex containing four subunits: a flavoprotein, an iron-sulfur protein, plus two membrane-anchoring proteins, SdhC and SdhD. It depends on heme as a cofactor.

It localises to the cell membrane. It participates in carbohydrate metabolism; tricarboxylic acid cycle. Membrane-anchoring subunit of succinate dehydrogenase (SDH). This chain is Succinate dehydrogenase hydrophobic membrane anchor subunit (sdhD), found in Thermoplasma acidophilum (strain ATCC 25905 / DSM 1728 / JCM 9062 / NBRC 15155 / AMRC-C165).